The following is a 381-amino-acid chain: Succinyl-diaminopimelate desuccinylase (381 aa).

A Zn(2+)-binding site is contributed by His-72. Asp-74 is an active-site residue. Residue Asp-105 participates in Zn(2+) binding. Glu-139 functions as the Proton acceptor in the catalytic mechanism. Residues Glu-140, Glu-168, and His-354 each contribute to the Zn(2+) site.

The protein belongs to the peptidase M20A family. DapE subfamily. Homodimer. Requires Zn(2+) as cofactor. Co(2+) serves as cofactor.

The catalysed reaction is N-succinyl-(2S,6S)-2,6-diaminopimelate + H2O = (2S,6S)-2,6-diaminopimelate + succinate. It functions in the pathway amino-acid biosynthesis; L-lysine biosynthesis via DAP pathway; LL-2,6-diaminopimelate from (S)-tetrahydrodipicolinate (succinylase route): step 3/3. Catalyzes the hydrolysis of N-succinyl-L,L-diaminopimelic acid (SDAP), forming succinate and LL-2,6-diaminopimelate (DAP), an intermediate involved in the bacterial biosynthesis of lysine and meso-diaminopimelic acid, an essential component of bacterial cell walls. This Shewanella sp. (strain MR-7) protein is Succinyl-diaminopimelate desuccinylase.